The primary structure comprises 1207 residues: DNA-directed RNA polymerase subunit beta' (1207 aa).

Residues cysteine 60, cysteine 62, cysteine 75, and cysteine 78 each contribute to the Zn(2+) site. Positions 449, 451, and 453 each coordinate Mg(2+). Zn(2+)-binding residues include cysteine 822, cysteine 896, cysteine 903, and cysteine 906.

It belongs to the RNA polymerase beta' chain family. As to quaternary structure, the RNAP catalytic core consists of 2 alpha, 1 beta, 1 beta' and 1 omega subunit. When a sigma factor is associated with the core the holoenzyme is formed, which can initiate transcription. It depends on Mg(2+) as a cofactor. Zn(2+) serves as cofactor.

It carries out the reaction RNA(n) + a ribonucleoside 5'-triphosphate = RNA(n+1) + diphosphate. In terms of biological role, DNA-dependent RNA polymerase catalyzes the transcription of DNA into RNA using the four ribonucleoside triphosphates as substrates. This Staphylococcus aureus (strain MRSA252) protein is DNA-directed RNA polymerase subunit beta'.